Reading from the N-terminus, the 468-residue chain is 3-isopropylmalate dehydratase large subunit (468 aa).

The disordered stretch occupies residues 53–74 (QPSKTVATMDHNVPTDSRDLAG). Residues Cys-347, Cys-407, and Cys-410 each contribute to the [4Fe-4S] cluster site.

Belongs to the aconitase/IPM isomerase family. LeuC type 1 subfamily. In terms of assembly, heterodimer of LeuC and LeuD. Requires [4Fe-4S] cluster as cofactor.

It carries out the reaction (2R,3S)-3-isopropylmalate = (2S)-2-isopropylmalate. It functions in the pathway amino-acid biosynthesis; L-leucine biosynthesis; L-leucine from 3-methyl-2-oxobutanoate: step 2/4. Functionally, catalyzes the isomerization between 2-isopropylmalate and 3-isopropylmalate, via the formation of 2-isopropylmaleate. This Pasteurella multocida (strain Pm70) protein is 3-isopropylmalate dehydratase large subunit.